A 341-amino-acid chain; its full sequence is Anthranilate phosphoribosyltransferase (341 aa).

Residues Gly79, 82–83 (GD), Thr87, 89–92 (NIST), 107–115 (KHGNRAVSS), and Ser119 contribute to the 5-phospho-alpha-D-ribose 1-diphosphate site. Anthranilate is bound at residue Gly79. Residue Ser91 participates in Mg(2+) binding. Asn110 contributes to the anthranilate binding site. Residue Arg165 coordinates anthranilate. Mg(2+) contacts are provided by Asp224 and Glu225.

Belongs to the anthranilate phosphoribosyltransferase family. Homodimer. Mg(2+) serves as cofactor.

It catalyses the reaction N-(5-phospho-beta-D-ribosyl)anthranilate + diphosphate = 5-phospho-alpha-D-ribose 1-diphosphate + anthranilate. It functions in the pathway amino-acid biosynthesis; L-tryptophan biosynthesis; L-tryptophan from chorismate: step 2/5. Catalyzes the transfer of the phosphoribosyl group of 5-phosphorylribose-1-pyrophosphate (PRPP) to anthranilate to yield N-(5'-phosphoribosyl)-anthranilate (PRA). The polypeptide is Anthranilate phosphoribosyltransferase (Bacillus cereus (strain ZK / E33L)).